We begin with the raw amino-acid sequence, 429 residues long: SH2 domain-containing protein 5 (429 aa).

Residues 302–398 enclose the SH2 domain; that stretch reads WAFAGLSRSC…LSMGRLNPTY (97 aa).

As to quaternary structure, interacts with BCR. As to expression, highly expressed in brain, particularly in Purkinjie cells in the cerebellum and the cornu ammonis of the hippocampus.

The protein resides in the postsynaptic density. Its function is as follows. May be involved in synaptic plasticity regulation through the control of Rac-GTP levels. The protein is SH2 domain-containing protein 5 of Mus musculus (Mouse).